A 1209-amino-acid chain; its full sequence is Calcium-activated potassium channel subunit alpha-1 (1209 aa).

Over residues 1-23 the composition is skewed to gly residues; it reads MANGGGGGGGSSGGGGGGGGGSG. A disordered region spans residues 1-61; the sequence is MANGGGGGGG…SSSSSSSSSV (61 aa). The Extracellular segment spans residues 1–86; it reads MANGGGGGGG…VPCDSRGQRM (86 aa). Polar residues predominate over residues 25 to 39; the sequence is RMSSNIHANNLSLDA. The segment covering 40 to 60 has biased composition (low complexity); it reads SSSSSSSSSSSSSSSSSSSSS. A helical transmembrane segment spans residues 87-107; that stretch reads WWAFLASSMVTFFGGLFIILL. Topologically, residues 108–178 are cytoplasmic; that stretch reads WRTLKYLWTV…MISAQTLTGR (71 aa). Residues Cys-118, Cys-119, and Cys-121 are each lipidated (S-palmitoyl cysteine). A helical membrane pass occupies residues 179–199; that stretch reads VLVVLVFALSIGALVIYFIDS. Residues 200–214 lie on the Extracellular side of the membrane; that stretch reads SNPIESCQNFYKDFT. Residues 215–235 form a helical membrane-spanning segment; it reads LQIDMAFNVFFLLYFGLRFIA. Over 236-239 the chain is Cytoplasmic; sequence ANDK. Residues 240-260 traverse the membrane as a helical segment; that stretch reads LWFWLEVNSVVDFFTVPPVFV. At 261 to 264 the chain is on the extracellular side; it reads SVYL. The chain crosses the membrane as a helical; Voltage-sensor span at residues 265–285; the sequence is NRSWLGLRFLRALRLIQFSEI. Topologically, residues 286–300 are cytoplasmic; sequence LQFLNILKTSNSIKL. The helical transmembrane segment at 301 to 321 threads the bilayer; that stretch reads VNLLSIFISTWLTAAGFIHLV. Residues 322-335 are Extracellular-facing; the sequence is ENSGDPWENFQNNQ. The pore-forming intramembrane region spans 336 to 358; that stretch reads ALTYWECVYLLMVTMSTVGYGDV. The short motif at 352–355 is the Selectivity for potassium element; the sequence is TVGY. At 359–367 the chain is on the extracellular side; sequence YAKTTLGRL. A helical membrane pass occupies residues 368–388; it reads FMVFFILGGLAMFASYVPEII. At 389 to 1209 the chain is on the cytoplasmic side; that stretch reads ELIGNRKKYG…KQNRKEMVYR (821 aa). The 143-residue stretch at 407–549 folds into the RCK N-terminal 1 domain; that stretch reads RKHIVVCGHI…WNWKEGDDAI (143 aa). Mg(2+)-binding residues include Glu-439, Gln-462, and Glu-464. The tract at residues 556–576 is segment S7; the sequence is LGFIAQSCLAQGLSTMLANLF. Positions 613–633 are segment S8; it reads LSFPTVCELCFVKLKLLMIAI. Asp-670 bears the Phosphothreonine mark. Lys-672 is subject to Phosphoserine. The heme-binding motif stretch occupies residues 681–685; the sequence is CKACH. The disordered stretch occupies residues 703-733; the sequence is EDEQPPTLSPKKKQRNGGMRNSPNTSPKLMR. Thr-709 carries the phosphothreonine modification. Residues Ser-711, Ser-724, and Ser-728 each carry the phosphoserine modification. Positions 783-803 are segment S9; the sequence is VLSGHVVVCIFGDVSSALIGL. Residues 785–929 enclose the RCK N-terminal 2 domain; the sequence is SGHVVVCIFG…MDRSSPDNSP (145 aa). Thr-916 carries the post-translational modification Phosphothreonine. 2 positions are modified to phosphoserine: Ser-924 and Ser-928. The Calcium bowl signature appears at 976–998; sequence TELVNDTNVQFLDQDDDDDPDTE. Residues Gln-985, Asp-988, Asp-991, and Asp-993 each coordinate Ca(2+). The segment at 1005–1025 is segment S10; that stretch reads FACGTAFAVSVLDSLMSATYF. Over residues 1159–1184 the composition is skewed to low complexity; that stretch reads RASLSHSSHSSQSSSKKSSSVHSIPS. Residues 1159 to 1209 form a disordered region; the sequence is RASLSHSSHSSQSSSKKSSSVHSIPSTANRPNRPKSRESRDKQNRKEMVYR. Positions 1193–1209 are enriched in basic and acidic residues; sequence KSRESRDKQNRKEMVYR. Residues Ser-1194 and Ser-1197 each carry the phosphoserine modification.

This sequence belongs to the potassium channel family. Calcium-activated (TC 1.A.1.3) subfamily. KCa1.1/KCNMA1 sub-subfamily. In terms of assembly, homotetramer; which constitutes the calcium-activated potassium channel. Interacts with beta subunits KCNMB1, KCNMB2, KCNMB3 and KCNMB4. Interacts with gamma subunits LRRC26, LRRC38, LRRC52 and LRRC55. Beta and gamma subunits are accessory, and modulate its activity. Interacts with RAB11B. In terms of processing, phosphorylated. Phosphorylation by kinases such as PKA and/or PKG. In smooth muscles, phosphorylation affects its activity. Post-translationally, palmitoylation by ZDHHC22 and ZDHHC23 within the intracellular linker between the S0 and S1 transmembrane domains regulates localization to the plasma membrane. Depalmitoylated by LYPLA1 and LYPLAL1, leading to retard exit from the trans-Golgi network.

It localises to the cell membrane. The enzyme catalyses K(+)(in) = K(+)(out). With respect to regulation, ethanol and carbon monoxide-bound heme increase channel activation. Heme inhibits channel activation. In terms of biological role, potassium channel activated by both membrane depolarization or increase in cytosolic Ca(2+) that mediates export of K(+). It is also activated by the concentration of cytosolic Mg(2+). Its activation dampens the excitatory events that elevate the cytosolic Ca(2+) concentration and/or depolarize the cell membrane. It therefore contributes to repolarization of the membrane potential. Plays a key role in controlling excitability in a number of systems, such as regulation of the contraction of smooth muscle, the tuning of hair cells in the cochlea, regulation of transmitter release, and innate immunity. In smooth muscles, its activation by high level of Ca(2+), caused by ryanodine receptors in the sarcoplasmic reticulum, regulates the membrane potential. In cochlea cells, its number and kinetic properties partly determine the characteristic frequency of each hair cell and thereby helps to establish a tonotopic map. Kinetics of KCNMA1 channels are determined by alternative splicing, phosphorylation status and its combination with modulating beta subunits. Highly sensitive to both iberiotoxin (IbTx) and charybdotoxin (CTX). Its function is as follows. Potassium channel activated by both membrane depolarization or increase in cytosolic Ca(2+) that mediates export of K(+). This is Calcium-activated potassium channel subunit alpha-1 (Kcnma1) from Mus musculus (Mouse).